The following is a 338-amino-acid chain: Anthranilate phosphoribosyltransferase (338 aa).

5-phospho-alpha-D-ribose 1-diphosphate contacts are provided by residues glycine 80, glycine 83 to aspartate 84, threonine 88, asparagine 90 to threonine 93, lysine 108 to serine 116, and serine 120. Glycine 80 is an anthranilate binding site. Serine 92 contacts Mg(2+). Position 111 (asparagine 111) interacts with anthranilate. Arginine 166 is an anthranilate binding site. Positions 225 and 226 each coordinate Mg(2+).

Belongs to the anthranilate phosphoribosyltransferase family. As to quaternary structure, homodimer. It depends on Mg(2+) as a cofactor.

It catalyses the reaction N-(5-phospho-beta-D-ribosyl)anthranilate + diphosphate = 5-phospho-alpha-D-ribose 1-diphosphate + anthranilate. It functions in the pathway amino-acid biosynthesis; L-tryptophan biosynthesis; L-tryptophan from chorismate: step 2/5. In terms of biological role, catalyzes the transfer of the phosphoribosyl group of 5-phosphorylribose-1-pyrophosphate (PRPP) to anthranilate to yield N-(5'-phosphoribosyl)-anthranilate (PRA). The polypeptide is Anthranilate phosphoribosyltransferase (Herpetosiphon aurantiacus (strain ATCC 23779 / DSM 785 / 114-95)).